The chain runs to 89 residues: Small ribosomal subunit protein uS15 (89 aa).

This sequence belongs to the universal ribosomal protein uS15 family. As to quaternary structure, part of the 30S ribosomal subunit. Forms a bridge to the 50S subunit in the 70S ribosome, contacting the 23S rRNA.

In terms of biological role, one of the primary rRNA binding proteins, it binds directly to 16S rRNA where it helps nucleate assembly of the platform of the 30S subunit by binding and bridging several RNA helices of the 16S rRNA. Functionally, forms an intersubunit bridge (bridge B4) with the 23S rRNA of the 50S subunit in the ribosome. This is Small ribosomal subunit protein uS15 from Chloroflexus aurantiacus (strain ATCC 29366 / DSM 635 / J-10-fl).